A 543-amino-acid chain; its full sequence is Coiled-coil domain-containing protein 9 (543 aa).

Composition is skewed to basic and acidic residues over residues 38–47 and 59–72; these read IEEDRKKAEL and RSME…EEKS. The interval 38-543 is disordered; sequence IEEDRKKAEL…SGEAWPFANA (506 aa). Residue threonine 94 is modified to Phosphothreonine. Residues arginine 106, arginine 120, arginine 126, and arginine 128 each carry the omega-N-methylarginine modification. 3 positions are modified to asymmetric dimethylarginine: arginine 129, arginine 131, and arginine 133. At serine 135 the chain carries Phosphoserine. 3 stretches are compositionally biased toward basic and acidic residues: residues 146–183, 192–212, and 225–239; these read TSDR…REGV, FLDD…DRRE, and DFER…ERQG. Positions 147–183 form a coiled coil; sequence SDRKSKEWEERRRQNIEKMNEEMEKIAEYERNQREGV. Phosphoserine is present on residues serine 246 and serine 253. Basic and acidic residues-rich tracts occupy residues 256-277, 287-300, 309-318, and 359-372; these read GRER…QERL, WRRE…DGMF, ELSHRYDDQA, and YSDH…REEA. Phosphoserine is present on residues serine 374 and serine 384. A compositionally biased stretch (polar residues) spans 376–394; sequence APESSQSISLEETPTQASE. Residues 405 to 453 show a composition bias toward acidic residues; the sequence is EDGEEDVGEEEEGEEEGEDEEDEEWEDVSEDVTEEEEEEEEEFEEDEEG. A coiled-coil region spans residues 422-452; that stretch reads EDEEDEEWEDVSEDVTEEEEEEEEEFEEDEE. Serine 533 carries the post-translational modification Phosphoserine.

As to quaternary structure, probable component of the exon junction complex (EJC); the association is RNA-dependent.

In terms of biological role, probable component of the exon junction complex (EJC), a multiprotein complex that associates immediately upstream of the exon-exon junction on mRNAs and serves as a positional landmark for the intron exon structure of genes and directs post-transcriptional processes in the cytoplasm such as mRNA export, nonsense-mediated mRNA decay (NMD) or translation. In Mus musculus (Mouse), this protein is Coiled-coil domain-containing protein 9 (Ccdc9).